A 721-amino-acid chain; its full sequence is uncharacterized protein (721 aa).

A helical membrane pass occupies residues 6–26 (QLIFVNFYVILIIWWFVMGIL). 308 to 315 (GGTGSGKT) provides a ligand contact to ATP.

It belongs to the GSP E family. This protein undergoes a protein self splicing that involves a post-translational excision of the intervening region (intein) followed by peptide ligation.

It is found in the membrane. This is an uncharacterized protein from Methanocaldococcus jannaschii (strain ATCC 43067 / DSM 2661 / JAL-1 / JCM 10045 / NBRC 100440) (Methanococcus jannaschii).